Reading from the N-terminus, the 552-residue chain is uncharacterized protein (552 aa).

The DhaL domain maps to 8-200 (KLFADMIIQG…LLCVYEGFLK (193 aa)).

This is an uncharacterized protein from Staphylococcus haemolyticus (strain JCSC1435).